The primary structure comprises 463 residues: Hexokinase-7 (463 aa).

The Hexokinase domain occupies Ala-7–Ala-456. A hexokinase small subdomain region spans residues Asn-62–Ile-199. 3 residues coordinate ADP: Gly-76, Thr-77, and Asn-78. D-glucose is bound by residues Thr-165, Lys-166, Asn-200, and Asp-201. The hexokinase large subdomain stretch occupies residues Asn-200–Asp-445. Thr-224 is a binding site for ADP. D-glucose contacts are provided by Asn-227, Glu-255, and Glu-286. Gly-410 is a binding site for ADP.

Belongs to the hexokinase family. As to expression, expressed in roots, leaves, flowers, immature seeds and seed coat.

Its subcellular location is the cytoplasm. It catalyses the reaction a D-hexose + ATP = a D-hexose 6-phosphate + ADP + H(+). It carries out the reaction D-fructose + ATP = D-fructose 6-phosphate + ADP + H(+). The catalysed reaction is D-glucose + ATP = D-glucose 6-phosphate + ADP + H(+). It functions in the pathway carbohydrate metabolism; hexose metabolism. It participates in carbohydrate degradation; glycolysis; D-glyceraldehyde 3-phosphate and glycerone phosphate from D-glucose: step 1/4. In terms of biological role, fructose and glucose phosphorylating enzyme. Functions in sugar signaling via a glycolysis-dependent manner under aerobic conditions, but its signaling role is suppressed when oxygen is deficient. The polypeptide is Hexokinase-7 (HXK7) (Oryza sativa subsp. japonica (Rice)).